The primary structure comprises 346 residues: Golgi to ER traffic protein 4 (346 aa).

A disordered region spans residues 317–346 (GQNQGGSRRTPQGRSQSKTVEAPPASMELD). A compositionally biased stretch (polar residues) spans 321–335 (GGSRRTPQGRSQSKT).

The protein belongs to the GET4 family. In terms of assembly, component of the get4/get5/sgt2 sorting complex.

It is found in the cytoplasm. Component of the get4/get5/sgt2 sorting complex involved in the GET (guided entry of TA proteins) pathway that leads to the insertion of tail-anchored (TA) proteins into the endoplasmic reticulum. Get4 and get5 form an obligate complex that catalyzes the transfer of tail-anchored proteins destined to the endoplasmic reticulum from sgt2 to the cytosolic targeting factor which then targets the TA protein to the ER membrane via get1/get2. This is Golgi to ER traffic protein 4 from Aspergillus fumigatus (strain ATCC MYA-4609 / CBS 101355 / FGSC A1100 / Af293) (Neosartorya fumigata).